The primary structure comprises 948 residues: PHD finger protein 14 (948 aa).

The interval 22 to 302 (DYDSSDDSDF…LSQSKSNEDS (281 aa)) is disordered. Phosphoserine occurs at positions 26 and 29. Low complexity predominate over residues 36–47 (ASDSEGSGNGSE). Positions 60-71 (DSEENILEEELN) are enriched in acidic residues. The segment covering 72–85 (EDIKVKEEQLKNSA) has biased composition (basic and acidic residues). 2 positions are modified to phosphoserine: Ser84 and Ser91. Composition is skewed to basic and acidic residues over residues 95-110 (QLIKMEKKEEEENGER) and 117-139 (KEKEKEKEKEKEKEREKEKEKAT). The segment covering 140–174 (VSENVAASAAATTPATSPPAVNTSPSVPTTTTATE) has biased composition (low complexity). Ser196 is subject to Phosphoserine. Composition is skewed to acidic residues over residues 199 to 212 (ELNDMDDYDSEDDN) and 233 to 256 (DGDNEDDEDEGSGSDEDENDEGND). Tyr206 is modified (phosphotyrosine). Position 208 is a phosphoserine (Ser208). Residue Thr287 is modified to Phosphothreonine. Over residues 288-297 (NDSLTLSQSK) the composition is skewed to polar residues. Ser290, Ser294, Ser298, Ser302, and Ser308 each carry phosphoserine. The segment at 319 to 380 (ILICCVCLGD…PWFCDACKCG (62 aa)) adopts a PHD-type 1 zinc-finger fold. 6 residues coordinate Zn(2+): Cys322, Cys325, Cys339, Cys342, His347, and Cys350. Position 359 is a phosphoserine (Ser359). Positions 374, 377, 385, 388, 405, 408, 441, 444, 458, 463, 468, 471, 495, and 498 each coordinate Zn(2+). The C2HC pre-PHD-type zinc finger occupies 382–415 (SPSCELCPNQDGIFKETDAGRWVHIVCALYVPGV). The segment at 439-499 (KECSFCEDPR…PFFAYCKQHA (61 aa)) adopts a PHD-type 2 zinc-finger fold. Ser530 carries the phosphoserine modification. Positions 630-678 (MIQIQENMAEQKNIKDKLENEQEKLHVEYNKLCESLEELQNLNGKLRSE) form a coiled coil. Glu648 is covalently cross-linked (Glycyl lysine isopeptide (Lys-Gly) (interchain with G-Cter in SUMO2)). At Gln651 the chain carries Phosphoserine. The PHD-type 3 zinc finger occupies 725 to 779 (LYSCGICKKNHDQHLLLLCDTCKLHYHLGCLDPPLTRMPRKTKNSYWQCSECDQA). Zn(2+) is bound by residues Cys728, Cys731, Cys743, Cys746, His751, Cys754, Cys773, and Cys776. Phosphoserine occurs at positions 781, 782, and 835. The segment at 811 to 862 (VPQDVPPEPKKIPIRNTRTRGRKRSFVPEEEKHEERVPRERRQRQSVLQKKP) is disordered. The span at 836–850 (FVPEEEKHEERVPRE) shows a compositional bias: basic and acidic residues. The PHD-type 4 zinc finger occupies 868-921 (RTECATCKGTGDNENLVRCDECRLCYHFGCLDPPLKKSPKQTGYGWICQECDSS). Residues Cys871, Cys874, Cys886, Cys889, His894, Cys897, Cys915, and Cys918 each coordinate Zn(2+). Residues 920–948 (SSSSKEDENEAERKNISQELNMEQKNPKK) are disordered. Residues 922-935 (SSKEDENEAERKNI) are compositionally biased toward basic and acidic residues. Residues 936 to 948 (SQELNMEQKNPKK) show a composition bias toward polar residues.

It is found in the nucleus. The protein localises to the chromosome. It localises to the cytoplasm. Histone-binding protein. Binds preferentially to unmodified histone H3 but can also bind to a lesser extent to histone H3 trimethylated at 'Lys-9' (H3K9me3) as well as to histone H3 monomethylated at 'Lys-27' (H3K27ac) and trimethylated at 'Lys-27' (H3K27me3). Represses PDGFRA expression, thus playing a role in regulation of mesenchymal cell proliferation. Suppresses the expression of CDKN1A/p21 by reducing the level of trimethylation of histone H3 'Lys-4', leading to enhanced proliferation of germinal center B cells. In Homo sapiens (Human), this protein is PHD finger protein 14 (PHF14).